A 188-amino-acid chain; its full sequence is Inosine triphosphate pyrophosphatase (188 aa).

ITP is bound at residue Thr9 to Lys14. Glu39 lines the Mg(2+) pocket. Residues Lys51, Asp67–Thr68, Lys84, Phe143–Asp146, Lys166, and His171–Arg172 each bind ITP.

Belongs to the HAM1 NTPase family. As to quaternary structure, homodimer. Mg(2+) is required as a cofactor. Mn(2+) serves as cofactor.

The protein localises to the cytoplasm. It catalyses the reaction ITP + H2O = IMP + diphosphate + H(+). The enzyme catalyses dITP + H2O = dIMP + diphosphate + H(+). The catalysed reaction is XTP + H2O = XMP + diphosphate + H(+). Functionally, pyrophosphatase that hydrolyzes non-canonical purine nucleotides such as inosine triphosphate (ITP), deoxyinosine triphosphate (dITP) or xanthosine 5'-triphosphate (XTP) to their respective monophosphate derivatives. The enzyme does not distinguish between the deoxy- and ribose forms. Probably excludes non-canonical purines from RNA and DNA precursor pools, thus preventing their incorporation into RNA and DNA and avoiding chromosomal lesions. The polypeptide is Inosine triphosphate pyrophosphatase (Anopheles gambiae (African malaria mosquito)).